The primary structure comprises 67 residues: Toxin Bl-1 (67 aa).

Residues 2 to 66 enclose the LCN-type CS-alpha/beta domain; the sequence is RDGYISQPEN…GIIVDGIKCH (65 aa). Cystine bridges form between C12–C65, C16–C37, C23–C47, and C27–C49. Residue T67 is modified to Threonine amide.

It belongs to the long (4 C-C) scorpion toxin superfamily. Sodium channel inhibitor family. Alpha subfamily. Expressed by the venom gland.

Its subcellular location is the secreted. Its function is as follows. Alpha toxins bind voltage-independently at site-3 of sodium channels (Nav) and inhibit the inactivation of the activated channels, thereby blocking neuronal transmission. Is highly toxic to insects (tested on the crickets A.domesticus). This peptide may also be toxic to mammals, since it is similar to alpha-like toxins that are active on both insect and mammalian sodium channels. The polypeptide is Toxin Bl-1 (Buthacus leptochelys (Egyptian fat-tailed scorpion)).